A 923-amino-acid chain; its full sequence is Calmodulin-binding transcription activator 5 (923 aa).

A DNA-binding region (CG-1) is located at residues 25–151 (IQTMLDEAYS…YRETHEVHAA (127 aa)). The interval 272–372 (VYQNNNSCGA…HSHSDIPEQV (101 aa)) is transcription activation. One copy of the ANK repeat lies at 611–640 (QGWTALHWAAYYGREKMVAALLSAGARPNL). IQ domains are found at residues 757–786 (NIIA…IQYR), 799–828 (MRKK…SVGV), and 875–904 (LERS…AHEE). The segment at 824–846 (WSVGVLEKAILRWRLKRKGFRGL) is calmodulin-binding. The stretch at 887–914 (RSKKAQQDYRRMKLAHEEAQLEYDGMQE) forms a coiled coil.

It belongs to the CAMTA family. In terms of tissue distribution, expressed in roots, stems, leaves, pollen, top of sepals and siliques.

The protein resides in the nucleus. Functionally, transcription activator. Binds to the DNA consensus sequence 5'-[ACG]CGCG[GTC]-3'. Regulates transcriptional activity in response to calcium signals. Binds calmodulin in a calcium-dependent manner. Involved in response to cold. Contributes together with CAMTA3 to the positive regulation of the cold-induced expression of DREB1A/CBF3, DREB1B/CBF1 and DREB1C/CBF2. This is Calmodulin-binding transcription activator 5 from Arabidopsis thaliana (Mouse-ear cress).